Here is a 630-residue protein sequence, read N- to C-terminus: Pentatricopeptide repeat-containing protein At1g63130, mitochondrial (630 aa).

The transit peptide at 1-22 directs the protein to the mitochondrion; sequence MRRLFAISSTGNRFVHRSLLGK. PPR repeat units lie at residues 80 to 114, 115 to 149, 150 to 184, 185 to 219, 220 to 254, 255 to 289, 290 to 324, 325 to 359, 360 to 394, 395 to 429, 430 to 464, 465 to 499, 500 to 534, 535 to 569, and 570 to 604; these read SIVE…GISH, NLYT…GYEP, DIVT…GYQP, DSFT…GCQP, DLVT…KIEP, GVVI…GIRP, NVVT…KINP, NVVT…SIDP, DIFT…DCFP, NVVT…GLVG, NTVT…GVLP, DIMT…KMEP, DIYT…GVKP, NVVT…GPLP, and DSGT…RFVG.

This sequence belongs to the PPR family. P subfamily.

The protein localises to the mitochondrion. The protein is Pentatricopeptide repeat-containing protein At1g63130, mitochondrial of Arabidopsis thaliana (Mouse-ear cress).